The sequence spans 876 residues: Alanine--tRNA ligase (876 aa).

A catalytic region spans residues 2-461 (SKSTAEIRQA…VDSASEFKGY (460 aa)). At K74 the chain carries N6-acetyllysine. Residues 553–705 (DEARRARIRL…EAVTGEGAIA (153 aa)) form an editing region. Zn(2+) is bound by residues H564, H568, C666, and H670. The important for oligomerization stretch occupies residues 699–808 (TGEGAIATVH…STIIVLATVV (110 aa)). A C-Ala domain region spans residues 766-875 (IDVNGVKLLV…SVKGWVSAKL (110 aa)).

This sequence belongs to the class-II aminoacyl-tRNA synthetase family. As to quaternary structure, homotetramer. It depends on Zn(2+) as a cofactor.

It localises to the cytoplasm. The catalysed reaction is tRNA(Ala) + L-alanine + ATP = L-alanyl-tRNA(Ala) + AMP + diphosphate. The enzyme catalyses (S)-lactate + ATP + H(+) = (S)-lactoyl-AMP + diphosphate. It carries out the reaction (S)-lactoyl-AMP + L-lysyl-[protein] = N(6)-[(S)-lactoyl]-L-lysyl-[protein] + AMP + 2 H(+). Acetylation at Lys-74 decreases the alanylation activity for tRNA(Ala); a protein that is fully acetylated is inactive in vitro. In terms of biological role, catalyzes the attachment of L-alanine to tRNA(Ala) in a two-step reaction: L-alanine is first activated by ATP to form Ala-AMP and then transferred to the acceptor end of tRNA(Ala). AlaRS also incorrectly activates the sterically smaller amino acid glycine as well as the sterically larger amino acid L-serine; generates 2-fold more mischarged Gly than Ser. These mischarged amino acids occur because the of inherent physicochemical limitations on discrimination between closely related amino acids (Ala, Gly and Ser) in the charging step. In presence of high levels of lactate, also acts as a protein lactyltransferase that mediates lactylation of lysine residues in target proteins. Edits mischarged Ser-tRNA(Ala) and Gly-tRNA(Ala) but not incorrectly charged Ser-tRNA(Thr). Dtd edits Gly-tRNA(Ala) 4-fold better than does AlaRS. Its function is as follows. Attaches Ala to transfer-messenger RNA (tmRNA, also known as 10Sa RNA, the product of the ssrA gene). tmRNA plays a major role in rescue of stalled ribosomes via trans-translation. The polypeptide is Alanine--tRNA ligase (alaS) (Escherichia coli (strain K12)).